A 313-amino-acid chain; its full sequence is Olfactory receptor 10K1 (313 aa).

At 1–25 (MEQVNKTVVREFVVLGFSSLARLQQ) the chain is on the extracellular side. The N-linked (GlcNAc...) asparagine glycan is linked to N5. Residues 26 to 46 (LLFVIFLLLYLFTLGTNAIII) traverse the membrane as a helical segment. The Cytoplasmic segment spans residues 47-54 (STIVLDRA). Residues 55–75 (LHTPMYFFLAILSCSEICYTF) form a helical membrane-spanning segment. Topologically, residues 76–99 (VIVPKMLVDLLSQKKTISFLGCAI) are extracellular. Residues 100–120 (QMFSFLFFGSSHSFLLAAMGY) traverse the membrane as a helical segment. The Cytoplasmic portion of the chain corresponds to 121–139 (DRYMAICNPLRYSVLMGHG). A helical membrane pass occupies residues 140-160 (VCMGLMAAACACGFTVSLVTT). The Extracellular segment spans residues 161–197 (SLVFHLPFHSSNQLHHFFCDISPVLKLASQHSGFSQL). Residues 198 to 217 (VIFMLGVFALVIPLLLILVS) form a helical membrane-spanning segment. The Cytoplasmic segment spans residues 218–237 (YIRIISAILKIPSSVGRYKT). A helical transmembrane segment spans residues 238 to 258 (FSTCASHLIVVTVHYSCASFI). Topologically, residues 259–271 (YLRPKTNYTSSQD) are extracellular. N-linked (GlcNAc...) asparagine glycosylation is present at N265. Residues 272–292 (TLISVSYTILTPLFNPMIYSL) form a helical membrane-spanning segment. Over 293–313 (RNKEFKSALRRTIGQTFYPLS) the chain is Cytoplasmic.

The protein belongs to the G-protein coupled receptor 1 family.

The protein resides in the cell membrane. Functionally, odorant receptor. The chain is Olfactory receptor 10K1 (OR10K1) from Homo sapiens (Human).